A 902-amino-acid polypeptide reads, in one-letter code: Cytosolic 10-formyltetrahydrofolate dehydrogenase (902 aa).

The interval M1 to A310 is hydrolase domain. Residue S9 is modified to Phosphoserine. The residue at position 38 (K38) is an N6-succinyllysine. Q88–I90 provides a ligand contact to (6R)-10-formyltetrahydrofolate. Residue H106 is the Proton donor of the active site. (6R)-10-formyltetrahydrofolate is bound at residue D142. One can recognise a Carrier domain in the interval E318–L395. S354 carries the O-(pantetheine 4'-phosphoryl)serine modification. Residues T417–Y902 form an aldehyde dehydrogenase domain region. NADP(+) contacts are provided by residues I571–W573 and K597–Q600. A phosphoserine mark is found at S629 and S631. NADP(+) contacts are provided by residues G630–Q635 and G650–S651. K660 carries the N6-succinyllysine modification. Catalysis depends on E673, which acts as the Proton acceptor. E673 to L674 contributes to the NADP(+) binding site. The active-site Proton donor is C707. K757 lines the NADP(+) pocket. The residue at position 767 (K767) is an N6-succinyllysine. E804–F806 contacts NADP(+). S825 carries the phosphoserine modification. K882 is subject to N6-acetyllysine.

In the N-terminal section; belongs to the GART family. The protein in the C-terminal section; belongs to the aldehyde dehydrogenase family. ALDH1L subfamily. In terms of assembly, homotetramer. Phosphopantetheinylation at Ser-354 by AASDHPPT is required for the formyltetrahydrofolate dehydrogenase activity. In terms of tissue distribution, highly expressed in liver (at protein level). Also expressed in pancreas, brain and lung (at protein level).

The protein localises to the cytoplasm. It is found in the cytosol. The enzyme catalyses (6R)-10-formyltetrahydrofolate + NADP(+) + H2O = (6S)-5,6,7,8-tetrahydrofolate + CO2 + NADPH + H(+). Its function is as follows. Cytosolic 10-formyltetrahydrofolate dehydrogenase that catalyzes the NADP(+)-dependent conversion of 10-formyltetrahydrofolate to tetrahydrofolate and carbon dioxide. May also have an NADP(+)-dependent aldehyde dehydrogenase activity towards formaldehyde, acetaldehyde, propionaldehyde, and benzaldehyde. This is Cytosolic 10-formyltetrahydrofolate dehydrogenase from Mus musculus (Mouse).